The chain runs to 349 residues: Anthranilate phosphoribosyltransferase (349 aa).

5-phospho-alpha-D-ribose 1-diphosphate contacts are provided by residues glycine 82, 85-86 (GD), 92-95 (NVST), 110-118 (KHGNRGVSS), and serine 122. Glycine 82 is a binding site for anthranilate. Position 94 (serine 94) interacts with Mg(2+). Residue asparagine 113 participates in anthranilate binding. Anthranilate is bound at residue arginine 168. The Mg(2+) site is built by aspartate 227 and glutamate 228.

This sequence belongs to the anthranilate phosphoribosyltransferase family. In terms of assembly, homodimer. The cofactor is Mg(2+).

It carries out the reaction N-(5-phospho-beta-D-ribosyl)anthranilate + diphosphate = 5-phospho-alpha-D-ribose 1-diphosphate + anthranilate. Its pathway is amino-acid biosynthesis; L-tryptophan biosynthesis; L-tryptophan from chorismate: step 2/5. Catalyzes the transfer of the phosphoribosyl group of 5-phosphorylribose-1-pyrophosphate (PRPP) to anthranilate to yield N-(5'-phosphoribosyl)-anthranilate (PRA). The chain is Anthranilate phosphoribosyltransferase from Acinetobacter baumannii (strain ATCC 17978 / DSM 105126 / CIP 53.77 / LMG 1025 / NCDC KC755 / 5377).